A 169-amino-acid chain; its full sequence is Putative hydrolase 111R (169 aa).

Residues 46–169 (FEKRKAGVFV…QKILMALSCN (124 aa)) form the Nudix hydrolase domain. The Nudix box signature appears at 76–98 (GHMEAYDHSPKTCAERELKEETG). Glutamate 92, glutamate 96, and aspartate 138 together coordinate Mg(2+).

It belongs to the Nudix hydrolase family. Mg(2+) is required as a cofactor. Requires Mn(2+) as cofactor.

In Aedes vexans (Inland floodwater mosquito), this protein is Putative hydrolase 111R.